The following is a 421-amino-acid chain: Trimethyllysine dioxygenase, mitochondrial (421 aa).

The transit peptide at 1–15 (MWYHKLLHQQSRLRN) directs the protein to the mitochondrion. Residues Lys179 and Lys236 each carry the N6-acetyllysine modification. Fe cation contacts are provided by His242, Asp244, and His389.

This sequence belongs to the gamma-BBH/TMLD family. As to quaternary structure, homodimer. Requires Fe(2+) as cofactor. It depends on L-ascorbate as a cofactor.

It is found in the mitochondrion matrix. It catalyses the reaction N(6),N(6),N(6)-trimethyl-L-lysine + 2-oxoglutarate + O2 = (3S)-3-hydroxy-N(6),N(6),N(6)-trimethyl-L-lysine + succinate + CO2. Its pathway is amine and polyamine biosynthesis; carnitine biosynthesis. In terms of biological role, converts trimethyllysine (TML) into hydroxytrimethyllysine (HTML). This chain is Trimethyllysine dioxygenase, mitochondrial (Tmlhe), found in Mus musculus (Mouse).